Here is a 141-residue protein sequence, read N- to C-terminus: Putative nickel-responsive regulator (141 aa).

His-83, His-94, His-96, and Cys-102 together coordinate Ni(2+).

Belongs to the transcriptional regulatory CopG/NikR family. Ni(2+) serves as cofactor.

Transcriptional regulator. This chain is Putative nickel-responsive regulator, found in Methanopyrus kandleri (strain AV19 / DSM 6324 / JCM 9639 / NBRC 100938).